A 644-amino-acid polypeptide reads, in one-letter code: DNA mismatch repair protein MutL (644 aa).

Disordered regions lie at residues 338–390 (RPNA…ERPA) and 416–445 (QPQEAAEEAAGTPAPPASSSPAMAETDDTQ). Composition is skewed to low complexity over residues 349–366 (EATPSTDATTATAAEASA) and 416–427 (QPQEAAEEAAGT).

Belongs to the DNA mismatch repair MutL/HexB family.

Its function is as follows. This protein is involved in the repair of mismatches in DNA. It is required for dam-dependent methyl-directed DNA mismatch repair. May act as a 'molecular matchmaker', a protein that promotes the formation of a stable complex between two or more DNA-binding proteins in an ATP-dependent manner without itself being part of a final effector complex. The chain is DNA mismatch repair protein MutL from Chromohalobacter salexigens (strain ATCC BAA-138 / DSM 3043 / CIP 106854 / NCIMB 13768 / 1H11).